Consider the following 97-residue polypeptide: MEVTDVRLRRVNTEGRMRAIASITLDHEFVVHDIRVIDGNNGLFVAMPSKRTPDGEFRDIAHPINSGTRSKIQDAVLTEYHRLGELEEVEFEEAGAS.

This sequence belongs to the SpoVG family.

Its function is as follows. Essential for sporulation. Interferes with or is a negative regulator of the pathway leading to asymmetric septation. The protein is Putative septation protein SpoVG of Bacillus cereus (strain 03BB102).